A 1537-amino-acid chain; its full sequence is Adhesion G protein-coupled receptor L3 (1537 aa).

The signal sequence occupies residues 1–19; it reads MWPPQLLILTMLLAPVVHG. Residues 20-943 are Extracellular-facing; sequence GKHNERHPAL…VKHSDAVHDL (924 aa). The segment at 53–80 is disordered; the sequence is PAAERSTAHRGQGPRGAARGVRGPGAPG. Residues 103-192 form the SUEL-type lectin domain; it reads SCESYPIELR…KYLEVQYECV (90 aa). 5 disulfides stabilise this stretch: cysteine 104-cysteine 134, cysteine 113-cysteine 191, cysteine 146-cysteine 178, cysteine 159-cysteine 165, and cysteine 203-cysteine 385. A glycan (N-linked (GlcNAc...) asparagine) is linked at asparagine 161. One can recognise an Olfactomedin-like domain in the interval 202–461; it reads LCPGLLKGVY…VVKYSLDFGP (260 aa). The segment at 317-347 is interaction with FLRT3; sequence YHDTSPYRWGGKSDIDLAVDENGLWVIYATE. 4 residues coordinate Ca(2+): aspartate 332, asparagine 380, alanine 381, and valine 435. Residues 521 to 540 form a disordered region; sequence RSTTASLPGRRNRSTSTPSP. Residues asparagine 532, asparagine 617, asparagine 827, asparagine 840, asparagine 885, and asparagine 911 are each glycosylated (N-linked (GlcNAc...) asparagine). One can recognise a GAIN-B domain in the interval 756 to 935; it reads DIVRENTDNI…AVLMAHVEVK (180 aa). 2 disulfides stabilise this stretch: cysteine 886-cysteine 917 and cysteine 905-cysteine 919. Residues 886–935 are GPS; that stretch reads CSFWSYSKRTMTGYWSTQGCRLLTTNKTHTTCSCNHLTNFAVLMAHVEVK. The stachel stretch occupies residues 923-939; sequence TNFAVLMAHVEVKHSDA. A helical membrane pass occupies residues 944-969; sequence LLDVITWVGILLSLVCLLICIFTFCF. At 970-975 the chain is on the cytoplasmic side; the sequence is FRGLQS. The chain crosses the membrane as a helical span at residues 976-999; sequence DRNTIHKNLCISLFVAELLFLIGI. A glycan (N-linked (GlcNAc...) asparagine) is linked at asparagine 1000. Residues 1000–1006 are Extracellular-facing; it reads NRTDQPI. The chain crosses the membrane as a helical span at residues 1007-1034; that stretch reads ACAVFAALLHFFFLAAFTWMFLEGVQLY. Cysteine 1008 and cysteine 1080 form a disulfide bridge. Over 1035 to 1048 the chain is Cytoplasmic; it reads IMLVEVFESEHSRR. Residues 1049 to 1071 form a helical membrane-spanning segment; sequence KYFYLVGYGMPALIVAVSAAVDY. At 1072–1086 the chain is on the extracellular side; the sequence is RSYGTDKVCWLRLDT. A helical transmembrane segment spans residues 1087 to 1112; that stretch reads YFIWSFIGPATLIIMLNVIFLGIALY. At 1113–1142 the chain is on the cytoplasmic side; that stretch reads KMFHHTAILKPESGCLDNINYEDNRPFIKS. A helical transmembrane segment spans residues 1143 to 1163; the sequence is WVIGAIALLCLLGLTWAFGLM. The Extracellular portion of the chain corresponds to 1164–1168; the sequence is YINES. Residue asparagine 1166 is glycosylated (N-linked (GlcNAc...) asparagine). A helical transmembrane segment spans residues 1169–1195; sequence TVIMAYLFTIFNSLQGMFIFIFHCVLQ. Topologically, residues 1196-1537 are cytoplasmic; that stretch reads KKVRKEYGKC…KGPAHLVTSL (342 aa). The interval 1213–1237 is disordered; sequence GKSTESSIGSGKTSGSRTPGRYSTG. Phosphoserine occurs at positions 1254 and 1522. The segment at 1512-1537 is disordered; the sequence is FIVPPNKDGASPEGTSKGPAHLVTSL. The PDZ-binding motif lies at 1532 to 1537; it reads HLVTSL.

It belongs to the G-protein coupled receptor 2 family. LN-TM7 subfamily. In terms of assembly, heterodimer of 2 chains generated by proteolytic processing; the large extracellular N-terminal fragment and the membrane-bound C-terminal fragment predominantly remain associated and non-covalently linked. Interacts (via olfactomedin-like domain) with FLRT1 (via extracellular domain). Interacts (via olfactomedin-like domain) with FLRT2 (via extracellular domain). Interacts (via olfactomedin-like domain) with FLRT3 (via extracellular domain); the interaction is direct. Interacts (via extracellular domain) with TENM1. Interacts (via extracellular domain) with TENM2. Interacts (via extracellular domain) with TENM3. Identified in a complex with FLRT3 and UNC5B; does not interact with UNC5B by itself. Identified in a complex with FLRT3 and UNC5D; does not interact with UNC5D by itself. Interacts (via PDZ-binding motif) with SHANK3. Interacts (via PDZ-binding motif) with DLG4. Post-translationally, autoproteolytically processed at the GPS region of the GAIN-B domain; this cleavage modulates receptor activity. In terms of processing, O-glycosylated (major) and N-glycosylated. As to expression, localizes to postsynaptic spines in non-overlapping dendritic domains of CA1-region pyramidal neurons: specifically localizes to excitatory synapses in the S.oriens and S.radiatum, corresponding to distinct presynaptic inputs onto CA1-region pyramidal neurons.

The protein localises to the cell membrane. Its subcellular location is the postsynaptic cell membrane. It localises to the cell projection. It is found in the axon. The protein resides in the cell junction. With respect to regulation, forms a heterodimer of 2 chains generated by proteolytic processing that remain associated through non-covalent interactions mediated by the GAIN-B domain. In the inactivated receptor, the Stachel sequence (also named stalk) is embedded in the GAIN-B domain, where it adopts a beta-strand conformation. On activation, the Stachel moves into the 7 transmembrane region and adopts a twisted hook-shaped configuration that forms contacts within the receptor, leading to coupling of a G-alpha protein, which activates signaling. The cleaved GAIN-B and N-terminal domains can then dissociate from the rest of the receptor. Its function is as follows. Orphan adhesion G-protein coupled receptor (aGPCR), which mediates synapse specificity. Ligand binding causes a conformation change that triggers signaling via guanine nucleotide-binding proteins (G proteins) and modulates the activity of downstream effectors. ADGRL3 is coupled with different classes of G alpha proteins, such as G(12)/G(13), G(s), G(i) or G(q), depending on the context. Coupling to G(12)/G(13) G proteins, which mediates the activation Rho small GTPases is the most efficient. Following G-protein coupled receptor activation, associates with cell adhesion molecules that are expressed at the surface of adjacent cells to direct synapse specificity. Specifically mediates the establishment of Schaffer-collateral synapses formed by CA3-region axons on CA1-region pyramidal neurons in the hippocampus. Localizes to postsynaptic spines in excitatory synapses in the S.oriens and S.radiatum and interacts with presynaptic cell adhesion molecules FLRT3 and TENM2, promoting synapse formation. Plays a role in the development of glutamatergic synapses in the cortex. Important in determining the connectivity rates between the principal neurons in the cortex. In terms of biological role, orphan adhesion G-protein coupled receptor (aGPCR), which mediates synapse specificity. Ligand binding causes a conformation change that triggers signaling via guanine nucleotide-binding proteins (G proteins) and modulates the activity of downstream effectors, such as adenylate cyclase. Isoform 1 is specifically coupled to G(s) G proteins and mediates activation of adenylate cyclase activity. Following G-protein coupled receptor activation, undergoes liquid-liquid phase transition, associates with (1) cell adhesion molecules that are expressed at the surface of adjacent cells, as well as (2) PDZ-containing proteins, such as SHANK3 and DLG4, in the cytoplasm to direct synapse formation. Functionally, orphan adhesion G-protein coupled receptor (aGPCR). Ligand binding causes a conformation change that triggers signaling via guanine nucleotide-binding proteins (G proteins) and modulates the activity of downstream effectors, such as RhoA pathway. Isoform 7 is coupled to G(12) and/or G(13) G proteins (GNA12 and GNA13, respectively) and mediates the activation Rho small GTPases. In Mus musculus (Mouse), this protein is Adhesion G protein-coupled receptor L3.